The primary structure comprises 899 residues: Bifunctional uridylyltransferase/uridylyl-removing enzyme (899 aa).

The tract at residues 1–342 (MPQVDPDLFD…PGDAAGRVEP (342 aa)) is uridylyltransferase. Residues 343-705 (LNERFQVRDG…TTQREFEGAT (363 aa)) are uridylyl-removing. An HD domain is found at 461 to 583 (VDAHTLNLIK…VRDQTYLDYL (123 aa)). ACT domains follow at residues 706–789 (QIFI…IIQR) and 816–899 (ILEI…RISI).

The protein belongs to the GlnD family. Requires Mg(2+) as cofactor.

It catalyses the reaction [protein-PII]-L-tyrosine + UTP = [protein-PII]-uridylyl-L-tyrosine + diphosphate. The enzyme catalyses [protein-PII]-uridylyl-L-tyrosine + H2O = [protein-PII]-L-tyrosine + UMP + H(+). Its activity is regulated as follows. Uridylyltransferase (UTase) activity is inhibited by glutamine, while glutamine activates uridylyl-removing (UR) activity. Functionally, modifies, by uridylylation and deuridylylation, the PII regulatory proteins (GlnB and homologs), in response to the nitrogen status of the cell that GlnD senses through the glutamine level. Under low glutamine levels, catalyzes the conversion of the PII proteins and UTP to PII-UMP and PPi, while under higher glutamine levels, GlnD hydrolyzes PII-UMP to PII and UMP (deuridylylation). Thus, controls uridylylation state and activity of the PII proteins, and plays an important role in the regulation of nitrogen fixation and metabolism. The sequence is that of Bifunctional uridylyltransferase/uridylyl-removing enzyme from Azotobacter vinelandii (strain DJ / ATCC BAA-1303).